Reading from the N-terminus, the 265-residue chain is Thiazole synthase (265 aa).

Residue K103 is the Schiff-base intermediate with DXP of the active site. 1-deoxy-D-xylulose 5-phosphate-binding positions include G164, 190 to 191 (AG), and 212 to 213 (NT).

The protein belongs to the ThiG family. Homotetramer. Forms heterodimers with either ThiH or ThiS.

Its subcellular location is the cytoplasm. It carries out the reaction [ThiS sulfur-carrier protein]-C-terminal-Gly-aminoethanethioate + 2-iminoacetate + 1-deoxy-D-xylulose 5-phosphate = [ThiS sulfur-carrier protein]-C-terminal Gly-Gly + 2-[(2R,5Z)-2-carboxy-4-methylthiazol-5(2H)-ylidene]ethyl phosphate + 2 H2O + H(+). The protein operates within cofactor biosynthesis; thiamine diphosphate biosynthesis. In terms of biological role, catalyzes the rearrangement of 1-deoxy-D-xylulose 5-phosphate (DXP) to produce the thiazole phosphate moiety of thiamine. Sulfur is provided by the thiocarboxylate moiety of the carrier protein ThiS. In vitro, sulfur can be provided by H(2)S. The protein is Thiazole synthase of Bordetella bronchiseptica (strain ATCC BAA-588 / NCTC 13252 / RB50) (Alcaligenes bronchisepticus).